A 142-amino-acid polypeptide reads, in one-letter code: Large ribosomal subunit protein uL13 (142 aa).

Belongs to the universal ribosomal protein uL13 family. In terms of assembly, part of the 50S ribosomal subunit.

Functionally, this protein is one of the early assembly proteins of the 50S ribosomal subunit, although it is not seen to bind rRNA by itself. It is important during the early stages of 50S assembly. The polypeptide is Large ribosomal subunit protein uL13 (Paraburkholderia phytofirmans (strain DSM 17436 / LMG 22146 / PsJN) (Burkholderia phytofirmans)).